A 789-amino-acid chain; its full sequence is Mediator of RNA polymerase II transcription subunit 15 (789 aa).

Residues 9 to 73 are interaction with SREBF1; that stretch reads DWRSAAFRQK…IHFRDIHNKK (65 aa). Disordered stretches follow at residues 88–140 and 257–326; these read LTGG…APHG and QQQA…PLVS. Residues 89-102 show a composition bias toward low complexity; the sequence is TGGPTPGAAGIGMP. Over residues 108-118 the composition is skewed to gly residues; that stretch reads QSLGGMGGLGA. 3 stretches are compositionally biased toward low complexity: residues 257-274, 282-291, and 302-326; these read QQQALQAQPPMQQPSMQQ, ALPQQLSQLH, and AQQSPIAQNQPPQIPPQSQSQPLVS. Arginine 347 carries the post-translational modification Asymmetric dimethylarginine. Residues 404 to 531 are disordered; that stretch reads RFPPTSTMSA…PAGSSQAEEQ (128 aa). The segment covering 407 to 426 has biased composition (polar residues); that stretch reads PTSTMSAGPSSSISLGGQPT. Low complexity predominate over residues 427–450; that stretch reads TQVSQSSLTMLSSPSPGQQVQTPQ. Pro residues predominate over residues 451–463; the sequence is SMPPPPQPSPQPG. Over residues 464 to 483 the composition is skewed to low complexity; that stretch reads SQPNSNVSSGPAPSPSSFLP. Polar residues-rich tracts occupy residues 494–504 and 512–530; these read VTARTPQNFSV and TPVNPSSVMSPAGSSQAEE. The Nuclear localization signal motif lies at 548 to 565; it reads RRMINKIDKNEDRKKDLS. The residue at position 604 (threonine 604) is a Phosphothreonine.

It belongs to the Mediator complex subunit 15 family. As to quaternary structure, component of the Mediator complex, which is composed of MED1, MED4, MED6, MED7, MED8, MED9, MED10, MED11, MED12, MED13, MED13L, MED14, MED15, MED16, MED17, MED18, MED19, MED20, MED21, MED22, MED23, MED24, MED25, MED26, MED27, MED29, MED30, MED31, CCNC, CDK8 and CDC2L6/CDK11. The MED12, MED13, CCNC and CDK8 subunits form a distinct module termed the CDK8 module. Mediator containing the CDK8 module is less active than Mediator lacking this module in supporting transcriptional activation. Individual preparations of the Mediator complex lacking one or more distinct subunits have been variously termed ARC, CRSP, DRIP, PC2, SMCC and TRAP. Interacts with SMAD2, SMAD3, SREBF1 and SREBF2. Interacts with WWTR1. Interacts with TRIM11. Post-translationally, ubiquitinated by TRIM11, leading to proteasomal degradation.

It is found in the cytoplasm. The protein resides in the nucleus. Its function is as follows. Component of the Mediator complex, a coactivator involved in the regulated transcription of nearly all RNA polymerase II-dependent genes. Mediator functions as a bridge to convey information from gene-specific regulatory proteins to the basal RNA polymerase II transcription machinery. Mediator is recruited to promoters by direct interactions with regulatory proteins and serves as a scaffold for the assembly of a functional preinitiation complex with RNA polymerase II and the general transcription factors. Required for cholesterol-dependent gene regulation. Positively regulates the Nodal signaling pathway. The polypeptide is Mediator of RNA polymerase II transcription subunit 15 (Med15) (Mus musculus (Mouse)).